The sequence spans 816 residues: Probable E3 ubiquitin-protein ligase hulA (816 aa).

The region spanning 1–112 (MGSNLPAQPN…QMGGDEMLTR (112 aa)) is the C2 domain. 2 disordered regions span residues 134-238 (NLST…GWER) and 254-354 (RTTT…YFVD). A compositionally biased stretch (low complexity) spans 160–178 (VPQVAPSSSHPAASGAAPV). A compositionally biased stretch (polar residues) spans 181 to 192 (SASNPSLNPQRV). Residues 193–213 (PSTTRPSSTAAPASAAGAAAS) show a composition bias toward low complexity. Polar residues-rich tracts occupy residues 214-227 (NTHG…SFED) and 254-267 (RTTT…NYNE). The WW 1 domain occupies 230 to 263 (GRLPAGWERREDNLGRTYYVDHNTRTTTWTRPSS). The segment covering 268–295 (HAQRSQREANMQLERRAHQSRMLPEDRT) has biased composition (basic and acidic residues). Residues 296-310 (GANSPNLPESSQQAH) are compositionally biased toward polar residues. Positions 325-334 (ATGATTAGTG) are enriched in low complexity. WW domains lie at 334–367 (GELP…DPRR) and 394–427 (GPLP…DPRL). An HECT domain is found at 483 to 816 (SASDLKKRLM…VEETLGFGQE (334 aa)). The active-site Glycyl thioester intermediate is Cys-784.

This sequence belongs to the RSP5/NEDD4 family. Interacts with creD.

Its subcellular location is the cytoplasm. It catalyses the reaction S-ubiquitinyl-[E2 ubiquitin-conjugating enzyme]-L-cysteine + [acceptor protein]-L-lysine = [E2 ubiquitin-conjugating enzyme]-L-cysteine + N(6)-ubiquitinyl-[acceptor protein]-L-lysine.. The protein operates within protein modification; protein ubiquitination. Functionally, E3 ubiquitin-protein ligase which accepts ubiquitin from an E2 ubiquitin-conjugating enzyme in the form of a thioester and then directly transfers the ubiquitin to targeted substrates. Probably involved in the regulatory network controlling carbon source utilization. The protein is Probable E3 ubiquitin-protein ligase hulA (hulA) of Neosartorya fischeri (strain ATCC 1020 / DSM 3700 / CBS 544.65 / FGSC A1164 / JCM 1740 / NRRL 181 / WB 181) (Aspergillus fischerianus).